The chain runs to 1358 residues: Probable serine/threonine-protein kinase ifkB (1358 aa).

A Protein kinase domain is found at 1–582; it reads MIGKGGFGVV…TKQLLESGLL (582 aa). ATP-binding positions include 2–10 and Lys25; that span reads IGKGGFGVV. The interval 125 to 359 is disordered; the sequence is GANNTAGGGD…SSSRKKPPKE (235 aa). The span at 136–148 shows a compositional bias: polar residues; the sequence is VSNANSNKSMIVG. The span at 149-196 shows a compositional bias: low complexity; sequence NNNKKLTLSSSNTSSSSSLLSNNKSKILNTSKSTSTNTSTSTSTSNTN. Residues 197–208 show a composition bias toward basic residues; it reads KNKKISKKKKSK. Residues 258–285 are compositionally biased toward low complexity; it reads NNNNDSNNNYHSDNESDSFSGSISMSDG. Acidic residues predominate over residues 306–333; the sequence is DDNENDDDDEEDDDDEYDEEDDDYETFD. Residues 342-351 are compositionally biased toward low complexity; the sequence is SNNSKLSTSS. Catalysis depends on Asp413, which acts as the Proton acceptor. Disordered regions lie at residues 445–470 and 1148–1204; these read DDLNSSTSNAANNINLSSSTNSTAQQ and GSGG…QQTS. Over residues 447–466 the composition is skewed to low complexity; that stretch reads LNSSTSNAANNINLSSSTNS. Over residues 1148-1172 the composition is skewed to gly residues; the sequence is GSGGSGGSGGGSSMSSGGGGGGNSN. A compositionally biased stretch (low complexity) spans 1185-1199; the sequence is SNQSTSSSGNSNNSN.

It belongs to the protein kinase superfamily. Ser/Thr protein kinase family. GCN2 subfamily.

It catalyses the reaction L-seryl-[protein] + ATP = O-phospho-L-seryl-[protein] + ADP + H(+). The enzyme catalyses L-threonyl-[protein] + ATP = O-phospho-L-threonyl-[protein] + ADP + H(+). The protein is Probable serine/threonine-protein kinase ifkB (ifkB) of Dictyostelium discoideum (Social amoeba).